The primary structure comprises 174 residues: Transcription antitermination protein NusB (174 aa).

The protein belongs to the NusB family.

In terms of biological role, involved in transcription antitermination. Required for transcription of ribosomal RNA (rRNA) genes. Binds specifically to the boxA antiterminator sequence of the ribosomal RNA (rrn) operons. The sequence is that of Transcription antitermination protein NusB from Rhodopseudomonas palustris (strain ATCC BAA-98 / CGA009).